A 335-amino-acid chain; its full sequence is Cytoskeleton protein RodZ (335 aa).

Topologically, residues 1–111 (MNTEATHDQN…LGKRRKKRDG (111 aa)) are cytoplasmic. One can recognise an HTH cro/C1-type domain in the interval 19 to 71 (LRNAREQLGLSQQAVAERLCLKVSTVRDIEEDKAPADLASTFLRGYIRSYARL). Residues 30–49 (QQAVAERLCLKVSTVRDIEE) constitute a DNA-binding region (H-T-H motif). Residues 112–132 (WLMTFTWLVLFVVIGLSGAWW) traverse the membrane as a helical; Signal-anchor for type II membrane protein segment. Residues 133 to 335 (WQDHKAQQEE…TLNAEQSPAQ (203 aa)) are Periplasmic-facing. Polar residues predominate over residues 148–164 (DQSSAELNNNQSQSVPL). Positions 148 to 244 (DQSSAELNNN…PLPTDQAGVT (97 aa)) are disordered. 2 stretches are compositionally biased toward low complexity: residues 165 to 205 (DTST…DPQQ) and 217 to 239 (DTAATPAPAATTTPDSAAPLPTD).

It belongs to the RodZ family.

The protein localises to the cell inner membrane. Cytoskeletal protein that is involved in cell-shape control through regulation of the length of the long axis. The chain is Cytoskeleton protein RodZ from Escherichia coli O81 (strain ED1a).